A 283-amino-acid chain; its full sequence is Pseudokinase OPG198 (283 aa).

The ATP site is built by Met1 and Lys30. One can recognise a Protein kinase domain in the interval 1-283; the sequence is MESFKYCFDN…DRLRKLFIQD (283 aa).

This sequence belongs to the protein kinase superfamily. Ser/Thr protein kinase family. Poxviruses subfamily. As to quaternary structure, interacts with B1/VPK1. Interacts with host VRK1. Interacts with host VRK2.

It localises to the host nucleus. With respect to regulation, both catalytically active kinases B1/VPK1 and host VRK2 repress B12 inhibitory activity in a B1/VPK1 deletion mutant strain. In terms of biological role, pseudokinase that plays a role in viral DNA replication repression by activating the antiviral protein BANF1 and inhibiting the activity of host VRK1, a cellular modulator of BANF1. This is Pseudokinase OPG198 (OPG198) from Vaccinia virus (strain Western Reserve) (VACV).